Consider the following 366-residue polypeptide: 3-isopropylmalate dehydrogenase (366 aa).

77-90 (GPKWDDNPPHLRPE) is a binding site for NAD(+). Positions 97, 107, 135, and 223 each coordinate substrate. D223, D246, and D250 together coordinate Mg(2+). 280-292 (GSAPDIAGMNKAN) serves as a coordination point for NAD(+).

Belongs to the isocitrate and isopropylmalate dehydrogenases family. LeuB type 1 subfamily. In terms of assembly, homodimer. Mg(2+) is required as a cofactor. Mn(2+) serves as cofactor.

It is found in the cytoplasm. The catalysed reaction is (2R,3S)-3-isopropylmalate + NAD(+) = 4-methyl-2-oxopentanoate + CO2 + NADH. Its pathway is amino-acid biosynthesis; L-leucine biosynthesis; L-leucine from 3-methyl-2-oxobutanoate: step 3/4. Functionally, catalyzes the oxidation of 3-carboxy-2-hydroxy-4-methylpentanoate (3-isopropylmalate) to 3-carboxy-4-methyl-2-oxopentanoate. The product decarboxylates to 4-methyl-2 oxopentanoate. The sequence is that of 3-isopropylmalate dehydrogenase (leuB) from Bacillus caldotenax.